The chain runs to 261 residues: Enolase-phosphatase E1 (261 aa).

Residues Asp16 and Glu18 each contribute to the Mg(2+) site. Substrate is bound by residues 153 to 154 (SS) and Lys187. Asp212 lines the Mg(2+) pocket.

Belongs to the HAD-like hydrolase superfamily. MasA/MtnC family. In terms of assembly, monomer. Requires Mg(2+) as cofactor.

The protein localises to the cytoplasm. It is found in the nucleus. The catalysed reaction is 5-methylsulfanyl-2,3-dioxopentyl phosphate + H2O = 1,2-dihydroxy-5-(methylsulfanyl)pent-1-en-3-one + phosphate. The protein operates within amino-acid biosynthesis; L-methionine biosynthesis via salvage pathway; L-methionine from S-methyl-5-thio-alpha-D-ribose 1-phosphate: step 3/6. It participates in amino-acid biosynthesis; L-methionine biosynthesis via salvage pathway; L-methionine from S-methyl-5-thio-alpha-D-ribose 1-phosphate: step 4/6. Its function is as follows. Bifunctional enzyme that catalyzes the enolization of 2,3-diketo-5-methylthiopentyl-1-phosphate (DK-MTP-1-P) into the intermediate 2-hydroxy-3-keto-5-methylthiopentenyl-1-phosphate (HK-MTPenyl-1-P), which is then dephosphorylated to form the acireductone 1,2-dihydroxy-3-keto-5-methylthiopentene (DHK-MTPene). The polypeptide is Enolase-phosphatase E1 (Bos taurus (Bovine)).